A 421-amino-acid polypeptide reads, in one-letter code: Magnesium transporter MRS2-5 (421 aa).

Helical transmembrane passes span 357-377 (LLLT…AVFG) and 393-413 (YVLL…VLYF). Positions 377-379 (GMN) match the Required for magnesium transport activity motif.

The protein belongs to the CorA metal ion transporter (MIT) (TC 1.A.35.5) family. As to expression, expressed in the whole plant.

Its subcellular location is the membrane. Magnesium transporter that may mediate the influx of magnesium. The protein is Magnesium transporter MRS2-5 (MRS2-5) of Arabidopsis thaliana (Mouse-ear cress).